Reading from the N-terminus, the 766-residue chain is MGEICPRREDFDIDYILKNASLLEKVSLLAGYDFWHTAPLPRFNVPSVRVSDGPNGVRGTKFFDGVRAACLPCGTGLAATWDQSLLYDAGVLIGQDVYPTAAYIRGAQSTGVISTIKHFAANDQEHERISVNAVMSERALREVHLLPFQIAIADSAPGAVMTCYNKVNGQHLSESKEMLDGLLRREWGWKGLIMSDWFGTYSTAEALNAGLDLEMPGPTRLRGPLLELAISSRKVSRATLDERARTVLEFVQRARKAEVSAVESTRDFPEDRRLNRKLAADSIVLLKNESGLLPLNPQTLTSVALIGPNMKTAAFCGGGSASLQPYYSTSPYQGITSQLPPGVEVLYETGATSYAFIPELAASEVRTPEGQPGLGMRFYRDPPSVQERRVVEETIIQESSWQLMGFSNPELDRLFHADIEAELIAPATGPFQFGLAVYGSASLFLDDQLIIDNTTVQRGGTFFFGKGTLEETATVDLVQGQSYQIKVQFASGPSSKLVKPGVVNFGGGAGRLGMVQVVDPERAIARAVEAAKRADITILGVGLTRDHESEGFDRSHMDLPPAVASLVTAVLDVAPDAILLTQSGTPFSMLPWADLVKTHLHAWFGGNELGNGIADVLFGVVNPSGKLPLSFPRRIEDTPTYLNFGSERGQVTYGEGIYVGYKLLRKSPTSCALSIRVRSAPVHPCCFRSNSLLTRFVPQARFVVHLLCVLRFDGRHRVRYTECSKLGRRGRSGSSPAVYRGRSNNVVNRTSHQGAQRISKGGFAAR.

N-linked (GlcNAc...) asparagine glycosylation is present at asparagine 19. Aspartate 196 is an active-site residue. N-linked (GlcNAc...) asparagine glycans are attached at residues asparagine 288, asparagine 453, and asparagine 748. Residues 369–528 form the PA14 domain; sequence EGQPGLGMRF…DPERAIARAV (160 aa). Positions 726-766 are disordered; the sequence is LGRRGRSGSSPAVYRGRSNNVVNRTSHQGAQRISKGGFAAR. Residues 742-756 show a composition bias toward polar residues; the sequence is RSNNVVNRTSHQGAQ.

It belongs to the glycosyl hydrolase 3 family.

The protein localises to the secreted. The catalysed reaction is Hydrolysis of terminal, non-reducing beta-D-glucosyl residues with release of beta-D-glucose.. The protein operates within glycan metabolism; cellulose degradation. In terms of biological role, beta-glucosidases are one of a number of cellulolytic enzymes involved in the degradation of cellulosic biomass. Catalyzes the last step releasing glucose from the inhibitory cellobiose. This Aspergillus fumigatus (strain CBS 144.89 / FGSC A1163 / CEA10) (Neosartorya fumigata) protein is Probable beta-glucosidase K (bglK).